Reading from the N-terminus, the 1068-residue chain is Integrator complex subunit 3 homolog (1068 aa).

Disordered regions lie at residues 916–939 (YPSS…STPS) and 1001–1068 (VGRR…NDSD). A phosphoserine mark is found at Ser-1038, Ser-1039, Ser-1043, and Ser-1044.

This sequence belongs to the Integrator subunit 3 family. As to quaternary structure, belongs to the multiprotein complex Integrator, at least composed of IntS1, IntS2, IntS3, IntS4, omd/IntS5, IntS6, defl/IntS7, IntS8, IntS9, IntS10, IntS11, IntS12, asun/IntS13, IntS14 and IntS15. The core complex associates with protein phosphatase 2A subunits mts/PP2A and Pp2A-29B, to form the Integrator-PP2A (INTAC) complex.

It is found in the nucleus. The protein resides in the cytoplasm. In terms of biological role, component of the integrator complex, a multiprotein complex that terminates RNA polymerase II (Pol II) transcription in the promoter-proximal region of genes. The integrator complex provides a quality checkpoint during transcription elongation by driving premature transcription termination of transcripts that are unfavorably configured for transcriptional elongation: the complex terminates transcription by (1) catalyzing dephosphorylation of the C-terminal domain (CTD) of Pol II subunit Polr2A/Rbp1 and Spt5, and (2) degrading the exiting nascent RNA transcript via endonuclease activity. The integrator complex is also involved in the 3'-end processing of the U7 snRNA, and also the spliceosomal snRNAs U1, U2, U4 and U5. The sequence is that of Integrator complex subunit 3 homolog (IntS3) from Drosophila sechellia (Fruit fly).